The primary structure comprises 276 residues: Ribosomal RNA small subunit methyltransferase A (276 aa).

S-adenosyl-L-methionine contacts are provided by Asn-19, Leu-21, Gly-46, Glu-71, Asp-94, and Asn-117.

This sequence belongs to the class I-like SAM-binding methyltransferase superfamily. rRNA adenine N(6)-methyltransferase family. RsmA subfamily.

It is found in the cytoplasm. It catalyses the reaction adenosine(1518)/adenosine(1519) in 16S rRNA + 4 S-adenosyl-L-methionine = N(6)-dimethyladenosine(1518)/N(6)-dimethyladenosine(1519) in 16S rRNA + 4 S-adenosyl-L-homocysteine + 4 H(+). Specifically dimethylates two adjacent adenosines (A1518 and A1519) in the loop of a conserved hairpin near the 3'-end of 16S rRNA in the 30S particle. May play a critical role in biogenesis of 30S subunits. This Burkholderia ambifaria (strain ATCC BAA-244 / DSM 16087 / CCUG 44356 / LMG 19182 / AMMD) (Burkholderia cepacia (strain AMMD)) protein is Ribosomal RNA small subunit methyltransferase A.